We begin with the raw amino-acid sequence, 401 residues long: Mannonate dehydratase (401 aa).

It belongs to the mannonate dehydratase family. Fe(2+) is required as a cofactor. Requires Mn(2+) as cofactor.

It carries out the reaction D-mannonate = 2-dehydro-3-deoxy-D-gluconate + H2O. It participates in carbohydrate metabolism; pentose and glucuronate interconversion. Functionally, catalyzes the dehydration of D-mannonate. In Brucella melitensis biotype 2 (strain ATCC 23457), this protein is Mannonate dehydratase.